A 145-amino-acid polypeptide reads, in one-letter code: Brain and acute leukemia cytoplasmic protein (145 aa).

Residue Gly-2 is the site of N-myristoyl glycine attachment. Cys-3 is lipidated: S-palmitoyl cysteine. The interval 3–35 is interaction with CAMK2A; it reads CGGSRADAIEPRYYESWTRETESTWLTYTDSDA. Disordered regions lie at residues 36-56 and 87-109; these read LPSAAATDSGPEAGGLHAGVL and CPNSQNLSSGPLTQKQNGLWATE. The span at 87–105 shows a compositional bias: polar residues; that stretch reads CPNSQNLSSGPLTQKQNGL.

As to quaternary structure, interacts with CAMK2A. Post-translationally, palmitoylation and myristoylation target the protein to the lipid rafts. As to expression, at the mRNA level, predominantly expressed in the brain. At the protein level, mainly expressed in muscle tissues. In skeletal muscles, expressed in cranial and facial muscles, muscles of the neck, back, thoracic wall, and thigh. Also found in the contractile myoepithelial cell layer of salivary glands. In smooth muscles, expressed in the gastric wall, uterus, urinary bladder, as well as in the muscular lining around seminiferous tubules, prostatic ducts, epididymis, vas deferens, walls of small blood vessels in the dermis, and fascial layers between muscle fibers, brain, and around the spinal cord. Strongly expressed in myocardium. High expression levels are observed in placental spongiotrophoblast and adjacent myometrium. Also expressed in bone marrow hematopoietic cells. In the mature thymus, expressed in rare scattered cells. Weakly expressed in the brain neuropil, particularly near the hippocampus, and spinal cord white matter. Not detected in skin keratinocytes or lung (at protein level).

The protein localises to the cytoplasm. It is found in the synapse. The protein resides in the synaptosome. It localises to the membrane raft. Its subcellular location is the postsynaptic density. May play a synaptic role at the postsynaptic lipid rafts possibly through interaction with CAMK2A. The protein is Brain and acute leukemia cytoplasmic protein (Baalc) of Mus musculus (Mouse).